The sequence spans 765 residues: uncharacterized protein (765 aa).

7 disordered regions span residues 9-61 (NDGN…PSSV), 128-164 (QQQQ…NYTS), 265-289 (TTSS…NITT), 301-373 (WTTT…TYIQ), 409-526 (IGNN…NQSN), 540-560 (PTKK…KYSE), and 668-765 (NSNT…KSRI). 2 stretches are compositionally biased toward low complexity: residues 40-61 (SNNI…PSSV) and 143-161 (SNKS…NNNN). Low complexity-rich tracts occupy residues 301–311 (WTTTKPTSSTK), 325–344 (YDSP…STSS), 353–373 (IQPT…TYIQ), 414–428 (SNHT…SLST), 438–485 (NNNN…INNN), 495–504 (DNQSSYSSPD), and 513–526 (SQQQ…NQSN). Positions 668–745 (NSNTDNYNYY…NNSRNNYNNN (78 aa)) are enriched in low complexity.

This is an uncharacterized protein from Dictyostelium discoideum (Social amoeba).